Here is a 348-residue protein sequence, read N- to C-terminus: uncharacterized protein (348 aa).

It belongs to the Mu gp47/PBSX XkdT family.

This is an uncharacterized protein from Bacillus subtilis (strain 168).